The primary structure comprises 504 residues: Malonyl-CoA decarboxylase, mitochondrial (504 aa).

A mitochondrion-targeting transit peptide spans 1–50 (MRGLRRGLSRLGPRLGPWAVPRSLRRVLRAAGPWRGQSSAGSVSERGGAS). Residues 51 to 201 (MEEVLSRSVP…VLKNMLSEWF (151 aa)) form an alpha-helical domain region. Positions 202-504 (STGFLNLERV…VSQFQQNSKL (303 aa)) are catalytic domain. The active-site Proton acceptor is the S340. H434 acts as the Proton donor in catalysis. The Microbody targeting signal motif lies at 502–504 (SKL).

Its subcellular location is the mitochondrion. It is found in the cytoplasm. The protein localises to the peroxisome. It carries out the reaction malonyl-CoA + H(+) = acetyl-CoA + CO2. The protein operates within metabolic intermediate biosynthesis; acetyl-CoA biosynthesis; acetyl-CoA from malonyl-CoA: step 1/1. Catalyzes the conversion of malonyl-CoA to acetyl-CoA. In the fatty acid biosynthesis MCD selectively removes malonyl-CoA and thus assures that methyl-malonyl-CoA is the only chain elongating substrate for fatty acid synthase and that fatty acids with multiple methyl side chains are produced. The polypeptide is Malonyl-CoA decarboxylase, mitochondrial (MLYCD) (Anser anser anser (Western greylag goose)).